A 190-amino-acid polypeptide reads, in one-letter code: Probable chorismate pyruvate-lyase (190 aa).

The substrate site is built by Arg-74, Leu-112, and Glu-173.

The protein belongs to the UbiC family.

The protein localises to the cytoplasm. It catalyses the reaction chorismate = 4-hydroxybenzoate + pyruvate. It participates in cofactor biosynthesis; ubiquinone biosynthesis. Removes the pyruvyl group from chorismate, with concomitant aromatization of the ring, to provide 4-hydroxybenzoate (4HB) for the ubiquinone pathway. This Bordetella bronchiseptica (strain ATCC BAA-588 / NCTC 13252 / RB50) (Alcaligenes bronchisepticus) protein is Probable chorismate pyruvate-lyase.